The chain runs to 289 residues: E3 ubiquitin-protein ligase MARCHF5 (289 aa).

Residues V4–V73 form an RING-CH-type zinc finger. Positions 12, 15, 31, 33, 41, 44, 63, and 66 each coordinate Zn(2+). 4 helical membrane-spanning segments follow: residues F97–V117, P137–I157, L202–G222, and T236–Q256.

It is found in the mitochondrion outer membrane. It localises to the endoplasmic reticulum membrane. The enzyme catalyses S-ubiquitinyl-[E2 ubiquitin-conjugating enzyme]-L-cysteine + [acceptor protein]-L-lysine = [E2 ubiquitin-conjugating enzyme]-L-cysteine + N(6)-ubiquitinyl-[acceptor protein]-L-lysine.. The protein operates within protein modification; protein ubiquitination. Its function is as follows. Mitochondrial E3 ubiquitin-protein ligase that plays a crucial role in the control of mitochondrial morphology by acting as a positive regulator of mitochondrial fission. May play a role in the prevention of cell senescence acting as a regulator of mitochondrial quality control. In Danio rerio (Zebrafish), this protein is E3 ubiquitin-protein ligase MARCHF5 (marchf5).